The sequence spans 1151 residues: Sterol regulatory element-binding protein 1 (1151 aa).

The tract at residues 1–59 (MDEPPFTEAALEQALAEPCELDAALLTDIEDMLQLINNQDSDFPGLFDAPYAGVAGGTD) is transcriptional activation (acidic). The Cytoplasmic portion of the chain corresponds to 1-487 (MDEPPFTEAA…HGRGMLDRSR (487 aa)). A 9aaTAD motif is present at residues 27-35 (TDIEDMLQL). Disordered regions lie at residues 39–125 (QDSD…IKEE) and 164–184 (GYPS…TSQT). Residues 57–69 (GTDPTSPDASSPG) show a composition bias toward low complexity. Residues 91–105 (TPPPPPVSPTQPAPT) are compositionally biased toward pro residues. Ser-98 and Ser-117 each carry phosphoserine. Over residues 170-184 (GSFSSATPPGSTSQT) the composition is skewed to polar residues. Residues 234-497 (QQVPVLLQPH…LALCVLVFLC (264 aa)) are interaction with LMNA. Residues 324–374 (EKRTAHNAIEKRYRSSINDKIIELKDLVVGTEAKLNKSAVLRKAIDYIRFL) enclose the bHLH domain. Phosphoserine; by SIK1 occurs at positions 338 and 339. The segment at 374 to 396 (LQQSNQKLKQENLSLRTAAHKSK) is leucine-zipper. At Ser-397 the chain carries Phosphoserine; by AMPK. Residues 399 to 479 (KDLVSCSSGG…KPEQLPAPHG (81 aa)) are disordered. Position 403 is a phosphoserine; by SIK1 (Ser-403). The segment covering 431 to 448 (DAGSPSQSSPLSLGSRGS) has biased composition (low complexity). Residue Ser-457 is modified to Phosphoserine. The chain crosses the membrane as a helical span at residues 488–508 (LALCVLVFLCLSCNPLASLMG). Residues 509–547 (SWALPGPSDATSAYHGPWRSVLGAEGRDGPGWVLWLLPP) are Lumenal-facing. Residues 548-568 (LVWLTNGLLVLLFLALLFVYG) form a helical membrane-spanning segment. Over 569 to 1151 (EPVTRPHSDP…LGGGTTVTSS (583 aa)) the chain is Cytoplasmic. The segment at 987 to 1006 (RQKPPPPSQASQGSSSGAQA) is disordered. The segment covering 995–1006 (QASQGSSSGAQA) has biased composition (low complexity). Phosphoserine is present on Ser-1060.

Belongs to the SREBP family. In terms of assembly, efficient DNA binding of the soluble transcription factor fragment requires dimerization with another bHLH protein. Interacts with CEBPA, the interaction produces a transcriptional synergy. Interacts with LMNA. Forms a tight complex with SCAP, the SCAP-SREBP complex, in the endoplasmic reticulum membrane and the Golgi apparatus. Interacts with PAQR3; the interaction anchors the SCAP-SREBP complex to the Golgi apparatus in low cholesterol conditions. Post-translationally, processed in the Golgi apparatus, releasing the protein from the membrane. At low cholesterol the SCAP-SREBP complex is recruited into COPII vesicles for export from the endoplasmic reticulum. In the Golgi, complex SREBPs are cleaved sequentially by site-1 (MBTPS1, S1P) and site-2 (MBTPS2, S2P) proteases. The first cleavage by site-1 protease occurs within the luminal loop, the second cleavage by site-2 protease occurs within the first transmembrane domain, releasing the transcription factor from the Golgi membrane. Phosphorylated by AMPK, leading to suppress protein processing and nuclear translocation, and repress target gene expression. Phosphorylation at Ser-403 by SIK1 represses activity possibly by inhibiting DNA-binding. In terms of processing, SCAP-free SREBF1 is ubiquitinated by the BCR(ARMC5) complex, leading to its degradation. Post-translationally, ubiquitinated; the nuclear form has a rapid turnover and is rapidly ubiquitinated and degraded by the proteasome in the nucleus.

The protein resides in the endoplasmic reticulum membrane. It localises to the golgi apparatus membrane. It is found in the cytoplasmic vesicle. Its subcellular location is the COPII-coated vesicle membrane. The protein localises to the nucleus. Its activity is regulated as follows. Activation by cleavage is down-regulated upon activation of SIRT3-dependent PRKAA1/AMPK-alpha signaling cascade which leads to inhibition of ATP-consuming lipogenesis to restore cellular energy balance. Functionally, precursor of the transcription factor form (Processed sterol regulatory element-binding protein 1), which is embedded in the endoplasmic reticulum membrane. Low sterol concentrations promote processing of this form, releasing the transcription factor form that translocates into the nucleus and activates transcription of genes involved in cholesterol biosynthesis and lipid homeostasis. In terms of biological role, key transcription factor that regulates expression of genes involved in cholesterol biosynthesis and lipid homeostasis. Binds to the sterol regulatory element 1 (SRE-1) (5'-ATCACCCCAC-3'). Has dual sequence specificity binding to both an E-box motif (5'-ATCACGTGA-3') and to SRE-1 (5'-ATCACCCCAC-3'). Regulates the promoters of genes involved in cholesterol biosynthesis and the LDL receptor (LDLR) pathway of sterol regulation. The polypeptide is Sterol regulatory element-binding protein 1 (SREBF1) (Sus scrofa (Pig)).